The following is a 359-amino-acid chain: UDP-3-O-acylglucosamine N-acyltransferase (359 aa).

Histidine 248 serves as the catalytic Proton acceptor.

This sequence belongs to the transferase hexapeptide repeat family. LpxD subfamily. In terms of assembly, homotrimer.

It carries out the reaction a UDP-3-O-[(3R)-3-hydroxyacyl]-alpha-D-glucosamine + a (3R)-hydroxyacyl-[ACP] = a UDP-2-N,3-O-bis[(3R)-3-hydroxyacyl]-alpha-D-glucosamine + holo-[ACP] + H(+). The protein operates within bacterial outer membrane biogenesis; LPS lipid A biosynthesis. Catalyzes the N-acylation of UDP-3-O-acylglucosamine using 3-hydroxyacyl-ACP as the acyl donor. Is involved in the biosynthesis of lipid A, a phosphorylated glycolipid that anchors the lipopolysaccharide to the outer membrane of the cell. In Chlamydia felis (strain Fe/C-56) (Chlamydophila felis), this protein is UDP-3-O-acylglucosamine N-acyltransferase.